The following is a 129-amino-acid chain: Small ribosomal subunit protein uS11c (129 aa).

This sequence belongs to the universal ribosomal protein uS11 family. In terms of assembly, part of the 30S ribosomal subunit.

The protein resides in the plastid. The protein localises to the chloroplast. The chain is Small ribosomal subunit protein uS11c from Rhodomonas salina (Cryptomonas salina).